Consider the following 496-residue polypeptide: RNA-binding motif protein, Y chromosome, family 1 member D (496 aa).

Residues 8 to 85 form the RRM domain; it reads GKLFIGGLNR…KAIKVEQAKK (78 aa). Disordered stretches follow at residues 67 to 349 and 452 to 496; these read DMNG…HRDY and KDQR…SSRY. 2 stretches are compositionally biased toward low complexity: residues 97 to 114 and 149 to 159; these read PASS…SARG and PVKRGPSSRSG. The span at 175–184 shows a compositional bias: polar residues; sequence NSWMGSQGPM. Composition is skewed to basic and acidic residues over residues 204 to 214, 242 to 253, 276 to 289, 313 to 326, 335 to 349, and 484 to 496; these read RNDRMSTRHDG, DNGHSNRDEHSS, AYRD…DESY, GYRD…HESY, SSRE…HRDY, and GESR…SSRY.

As to quaternary structure, interacts with splicing factor proteins SFRS3/SRP20, TRA2B/SFRS10, KHDRBS1/SAM68 and KHDRBS3. In terms of tissue distribution, testis-specific.

The protein localises to the nucleus. RNA-binding protein which may be involved in spermatogenesis. Required for sperm development, possibly by participating in pre-mRNA splicing in the testis. The protein is RNA-binding motif protein, Y chromosome, family 1 member D (RBMY1D) of Homo sapiens (Human).